The following is a 222-amino-acid chain: 7-cyano-7-deazaguanine synthase (222 aa).

11-21 (FSGGQDSTTCL) provides a ligand contact to ATP. The Zn(2+) site is built by Cys187, Cys195, Cys198, and Cys201.

This sequence belongs to the QueC family. Zn(2+) is required as a cofactor.

The enzyme catalyses 7-carboxy-7-deazaguanine + NH4(+) + ATP = 7-cyano-7-deazaguanine + ADP + phosphate + H2O + H(+). The protein operates within purine metabolism; 7-cyano-7-deazaguanine biosynthesis. Functionally, catalyzes the ATP-dependent conversion of 7-carboxy-7-deazaguanine (CDG) to 7-cyano-7-deazaguanine (preQ(0)). This chain is 7-cyano-7-deazaguanine synthase, found in Actinobacillus pleuropneumoniae serotype 3 (strain JL03).